The sequence spans 141 residues: Calcium-binding protein SPEC 2D (141 aa).

EF-hand domains lie at 10–42 (DQIK…MKSV), 43–72 (GHVL…AMIL), 73–107 (DKKC…FDRQ), and 108–141 (ITED…MNFC). Asp23, Asn25, Asp27, and Asn29 together coordinate Ca(2+). The Ca(2+) site is built by Asp84, Asp86, Lys90, Asp95, Asp121, Asp125, Lys127, and Glu132.

Found in cell lineages giving rise to the aboral ectoderm, a squamous epithelium covering the surface of the late stage embryo and larva.

Its function is as follows. Calcium-binding protein involved in larval development and metamorphosis. Likely to function as calcium buffers mediating the transport of calcium from the sea water to the blastocoel where calcium is required for skeleton formation. The polypeptide is Calcium-binding protein SPEC 2D (SPEC2D) (Strongylocentrotus purpuratus (Purple sea urchin)).